We begin with the raw amino-acid sequence, 661 residues long: UvrABC system protein C (661 aa).

The GIY-YIG domain occupies 52-130; the sequence is HKPGVYRMVD…IKRLHPRFNV (79 aa). Residues 240 to 275 form the UVR domain; sequence QSIKNDMVQAMHKAAKNFDFEQAAAYRDRLSALSHI.

The protein belongs to the UvrC family. In terms of assembly, interacts with UvrB in an incision complex.

It is found in the cytoplasm. In terms of biological role, the UvrABC repair system catalyzes the recognition and processing of DNA lesions. UvrC both incises the 5' and 3' sides of the lesion. The N-terminal half is responsible for the 3' incision and the C-terminal half is responsible for the 5' incision. In Bartonella henselae (strain ATCC 49882 / DSM 28221 / CCUG 30454 / Houston 1) (Rochalimaea henselae), this protein is UvrABC system protein C.